Here is a 212-residue protein sequence, read N- to C-terminus: Cyclin-dependent kinase inhibitor 3 (212 aa).

Residues 1-12 (MKPPSSIQTSEF) are compositionally biased toward polar residues. A disordered region spans residues 1–23 (MKPPSSIQTSEFDSSDEEPIEDE). The interval 1 to 34 (MKPPSSIQTSEFDSSDEEPIEDEQTPIQISWLPL) is interaction with CDK2. Residues 13 to 23 (DSSDEEPIEDE) show a composition bias toward acidic residues. The Tyrosine-protein phosphatase domain maps to 32-201 (LPLSRVNYSQ…FRDKLAAHLS (170 aa)). Cys140 (phosphocysteine intermediate) is an active-site residue.

Belongs to the protein-tyrosine phosphatase family. Interacts with cyclin-dependent kinases such as CDK1, CDK2 and CDK3. Does not interact with CDK4. Interacts (via C-terminus) with phosphorylated CDK2 (via C-terminal helix). Interacts with MS4A3 (via C-terminus); the interaction enhances CDKN3 enzymatic activity.

Its subcellular location is the cytoplasm. The protein resides in the perinuclear region. It carries out the reaction O-phospho-L-tyrosyl-[protein] + H2O = L-tyrosyl-[protein] + phosphate. The enzyme catalyses O-phospho-L-seryl-[protein] + H2O = L-seryl-[protein] + phosphate. It catalyses the reaction O-phospho-L-threonyl-[protein] + H2O = L-threonyl-[protein] + phosphate. May play a role in cell cycle regulation. Dual specificity phosphatase active toward substrates containing either phosphotyrosine or phosphoserine residues. Dephosphorylates CDK2 at 'Thr-160' in a cyclin-dependent manner. The sequence is that of Cyclin-dependent kinase inhibitor 3 from Sus scrofa (Pig).